The sequence spans 203 residues: Thymidylate kinase (203 aa).

10-17 (GIDGSGKS) contributes to the ATP binding site.

The protein belongs to the thymidylate kinase family.

It catalyses the reaction dTMP + ATP = dTDP + ADP. Functionally, phosphorylation of dTMP to form dTDP in both de novo and salvage pathways of dTTP synthesis. The protein is Thymidylate kinase of Brachyspira hyodysenteriae (strain ATCC 49526 / WA1).